The chain runs to 307 residues: UDP-3-O-acyl-N-acetylglucosamine deacetylase (307 aa).

The Zn(2+) site is built by H78, H241, and D245. Catalysis depends on H268, which acts as the Proton donor.

The protein belongs to the LpxC family. The cofactor is Zn(2+).

The catalysed reaction is a UDP-3-O-[(3R)-3-hydroxyacyl]-N-acetyl-alpha-D-glucosamine + H2O = a UDP-3-O-[(3R)-3-hydroxyacyl]-alpha-D-glucosamine + acetate. It participates in glycolipid biosynthesis; lipid IV(A) biosynthesis; lipid IV(A) from (3R)-3-hydroxytetradecanoyl-[acyl-carrier-protein] and UDP-N-acetyl-alpha-D-glucosamine: step 2/6. Catalyzes the hydrolysis of UDP-3-O-myristoyl-N-acetylglucosamine to form UDP-3-O-myristoylglucosamine and acetate, the committed step in lipid A biosynthesis. The sequence is that of UDP-3-O-acyl-N-acetylglucosamine deacetylase from Delftia acidovorans (strain DSM 14801 / SPH-1).